The sequence spans 257 residues: Alkaline phosphatase synthesis transcriptional regulatory protein SphR (257 aa).

In terms of domain architecture, Response regulatory spans 25-148 (RILVVEDEAV…ELVARCRALL (124 aa)). Position 83 is a 4-aspartylphosphate (Asp83). The segment at residues 159 to 257 (PAVLRYEGLK…TVRGFGYRLG (99 aa)) is a DNA-binding region (ompR/PhoB-type).

Post-translationally, phosphorylated by SphS.

Functionally, member of the two-component regulatory system SphR/SphS. Response regulator. Involved in inducible production of alkaline phosphatase in response to phosphate limitation as it is directly involved in the regulation of phoA transcription in response to phosphate limitation. Binds to two distinct sites upstream from the phoA promoter. This chain is Alkaline phosphatase synthesis transcriptional regulatory protein SphR (sphR), found in Synechococcus elongatus (strain ATCC 33912 / PCC 7942 / FACHB-805) (Anacystis nidulans R2).